We begin with the raw amino-acid sequence, 321 residues long: Bifunctional methyltransferase/endonuclease (321 aa).

Residues 1–86 (MLSVDYENFD…PLGSAEKMRR (86 aa)) are probable methylated-DNA--protein-cysteine methyltransferase. Residue Cys-61 is part of the active site. The interval 87 to 318 (LIRDGITITN…YDFSTRNTAI (232 aa)) is endonuclease V. Residues Asp-145 and Asp-204 each coordinate Mg(2+).

It in the N-terminal section; belongs to the MGMT family. In the C-terminal section; belongs to the endonuclease V family. Mg(2+) serves as cofactor.

The protein localises to the cytoplasm. It catalyses the reaction Endonucleolytic cleavage at apurinic or apyrimidinic sites to products with a 5'-phosphate.. In terms of biological role, DNA repair enzyme involved in the repair of deaminated bases. Selectively cleaves double-stranded DNA at the second phosphodiester bond 3' to a deoxyinosine leaving behind the intact lesion on the nicked DNA. The sequence is that of Bifunctional methyltransferase/endonuclease from Thermoplasma volcanium (strain ATCC 51530 / DSM 4299 / JCM 9571 / NBRC 15438 / GSS1).